The primary structure comprises 596 residues: Beta-fructofuranosidase, insoluble isoenzyme 7 (596 aa).

The first 24 residues, 1-24 (MARLGLAVCAASFHLFLLLASTSS), serve as a signal peptide directing secretion. Substrate-binding positions include 51 to 54 (WQND), glutamine 70, and tryptophan 78. The active site involves aspartate 54. Asparagine 82 carries N-linked (GlcNAc...) asparagine glycosylation. Residues 115-116 (WS), 179-180 (RD), and glutamate 234 each bind substrate. Asparagine 330 carries N-linked (GlcNAc...) asparagine glycosylation. An intrachain disulfide couples cysteine 432 to cysteine 478. Asparagine 552 carries N-linked (GlcNAc...) asparagine glycosylation.

Belongs to the glycosyl hydrolase 32 family.

The protein resides in the secreted. It localises to the extracellular space. The protein localises to the apoplast. It is found in the cell wall. It carries out the reaction Hydrolysis of terminal non-reducing beta-D-fructofuranoside residues in beta-D-fructofuranosides.. May play a role in sucrose partitioning during seed development. The protein is Beta-fructofuranosidase, insoluble isoenzyme 7 (CIN7) of Oryza sativa subsp. indica (Rice).